Here is a 135-residue protein sequence, read N- to C-terminus: Large ribosomal subunit protein uL16c (135 aa).

It belongs to the universal ribosomal protein uL16 family. In terms of assembly, part of the 50S ribosomal subunit.

The protein resides in the plastid. It is found in the chloroplast. The chain is Large ribosomal subunit protein uL16c from Populus alba (White poplar).